The primary structure comprises 137 residues: Large ribosomal subunit protein uL16 (137 aa).

This sequence belongs to the universal ribosomal protein uL16 family. As to quaternary structure, part of the 50S ribosomal subunit.

In terms of biological role, binds 23S rRNA and is also seen to make contacts with the A and possibly P site tRNAs. This Chelativorans sp. (strain BNC1) protein is Large ribosomal subunit protein uL16.